The chain runs to 295 residues: Cbb3-type cytochrome c oxidase subunit CcoP (295 aa).

Topologically, residues 1-31 (MAQKEKDALSGVETTGHEWDGLRELNNPLPK) are cytoplasmic. The helical transmembrane segment at 32–52 (WWLYIFYVCIAWSLVYYVLYP) threads the bilayer. Over 53–295 (AWPLGKSYTK…VYVHNLGGGK (243 aa)) the chain is Periplasmic. Cytochrome c domains are found at residues 108 to 200 (FAMA…LSLN) and 207 to 292 (AAAE…HNLG). The heme c site is built by C121, C124, H125, M175, C220, C223, H224, and M269.

Belongs to the CcoP / FixP family. Component of the cbb3-type cytochrome c oxidase at least composed of CcoN, CcoO, CcoQ and CcoP. It depends on heme c as a cofactor.

It localises to the cell inner membrane. Its pathway is energy metabolism; oxidative phosphorylation. Functionally, C-type cytochrome. Part of the cbb3-type cytochrome c oxidase complex. CcoP subunit is required for transferring electrons from donor cytochrome c via its heme groups to CcoO subunit. From there, electrons are shuttled to the catalytic binuclear center of CcoN subunit where oxygen reduction takes place. The complex also functions as a proton pump. The chain is Cbb3-type cytochrome c oxidase subunit CcoP from Azospirillum brasilense.